Here is a 206-residue protein sequence, read N- to C-terminus: MELKVTTLEGKEAGSVQLSDAIFGLEPRQDIIARCVQWQLNKRQAGTHKAKGRAEIWRTGKKMYKQKGTGGARHGSARVPQFRGGGRAFGPVVRSHATDLPKKVRALALKHALSAKAKDGDLLVIDKAALEAAKTKALLGHFSGLGLTNALIIDGAELNNGFAAAARNIPNMDVLPIQGINVYDILRRQKLVLTKAAIDALEARFK.

The protein belongs to the universal ribosomal protein uL4 family. As to quaternary structure, part of the 50S ribosomal subunit.

One of the primary rRNA binding proteins, this protein initially binds near the 5'-end of the 23S rRNA. It is important during the early stages of 50S assembly. It makes multiple contacts with different domains of the 23S rRNA in the assembled 50S subunit and ribosome. Functionally, forms part of the polypeptide exit tunnel. In Bradyrhizobium diazoefficiens (strain JCM 10833 / BCRC 13528 / IAM 13628 / NBRC 14792 / USDA 110), this protein is Large ribosomal subunit protein uL4.